Here is a 246-residue protein sequence, read N- to C-terminus: tRNA (guanine-N(1)-)-methyltransferase (246 aa).

Residues Gly113 and 133 to 138 contribute to the S-adenosyl-L-methionine site; that span reads IGDYVL.

The protein belongs to the RNA methyltransferase TrmD family. As to quaternary structure, homodimer.

The protein resides in the cytoplasm. It carries out the reaction guanosine(37) in tRNA + S-adenosyl-L-methionine = N(1)-methylguanosine(37) in tRNA + S-adenosyl-L-homocysteine + H(+). Functionally, specifically methylates guanosine-37 in various tRNAs. The polypeptide is tRNA (guanine-N(1)-)-methyltransferase (Haemophilus influenzae (strain PittGG)).